The sequence spans 137 residues: 2-iminobutanoate/2-iminopropanoate deaminase (137 aa).

An N-acetylserine modification is found at S2. An N6-succinyllysine mark is found at K13 and K67. The residue at position 74 (T74) is a Phosphothreonine. S136 carries the post-translational modification Phosphoserine.

In terms of assembly, homotrimer. Interacts with YTHDF2. Expressed by various malignant neoplasms.

The protein resides in the cytoplasm. Its subcellular location is the nucleus. The protein localises to the peroxisome. It localises to the mitochondrion. The enzyme catalyses 2-iminobutanoate + H2O = 2-oxobutanoate + NH4(+). It catalyses the reaction 2-iminopropanoate + H2O = pyruvate + NH4(+). Its function is as follows. Catalyzes the hydrolytic deamination of enamine/imine intermediates that form during the course of normal metabolism. May facilitate the release of ammonia from these potentially toxic reactive metabolites, reducing their impact on cellular components. It may act on enamine/imine intermediates formed by several types of pyridoxal-5'-phosphate-dependent dehydratases including L-threonine dehydratase. Functionally, also promotes endoribonucleolytic cleavage of some transcripts by promoting recruitment of the ribonuclease P/MRP complex. Acts by bridging YTHDF2 and the ribonuclease P/MRP complex. RIDA/HRSP12 binds to N6-methyladenosine (m6A)-containing mRNAs containing a 5'-GGUUC-3' motif: cooperative binding of RIDA/HRSP12 and YTHDF2 to such transcripts lead to recruitment of the ribonuclease P/MRP complex and subsequent endoribonucleolytic cleavage. The sequence is that of 2-iminobutanoate/2-iminopropanoate deaminase from Capra hircus (Goat).